The sequence spans 426 residues: Serine hydroxymethyltransferase 1 (426 aa).

Residues Leu-121 and 125 to 127 (GHL) each bind (6S)-5,6,7,8-tetrahydrofolate. Residue Lys-230 is modified to N6-(pyridoxal phosphate)lysine. (6S)-5,6,7,8-tetrahydrofolate is bound at residue 355–357 (SPF).

The protein belongs to the SHMT family. In terms of assembly, homodimer. Requires pyridoxal 5'-phosphate as cofactor.

It localises to the cytoplasm. The catalysed reaction is (6R)-5,10-methylene-5,6,7,8-tetrahydrofolate + glycine + H2O = (6S)-5,6,7,8-tetrahydrofolate + L-serine. The protein operates within one-carbon metabolism; tetrahydrofolate interconversion. Its pathway is amino-acid biosynthesis; glycine biosynthesis; glycine from L-serine: step 1/1. Catalyzes the reversible interconversion of serine and glycine with tetrahydrofolate (THF) serving as the one-carbon carrier. This reaction serves as the major source of one-carbon groups required for the biosynthesis of purines, thymidylate, methionine, and other important biomolecules. Also exhibits THF-independent aldolase activity toward beta-hydroxyamino acids, producing glycine and aldehydes, via a retro-aldol mechanism. The polypeptide is Serine hydroxymethyltransferase 1 (Hahella chejuensis (strain KCTC 2396)).